Reading from the N-terminus, the 367-residue chain is Aldo-keto reductase AMT2 (367 aa).

Asp76 contacts NADP(+). Catalysis depends on Tyr81, which acts as the Proton donor. Residue His173 participates in substrate binding. NADP(+) is bound by residues Ser203–Ser204, Gln229, Gly258–Pro268, and Ser330–Val338. The tract at residues Leu346 to Ser367 is disordered.

Belongs to the aldo/keto reductase family.

The protein operates within mycotoxin biosynthesis. Its function is as follows. Aldo-keto reductase; part of the gene clusters that mediate the biosynthesis of AM-toxins, host-selective toxins (HSTs) causing Alternaria blotch on apple, a worldwide distributed disease. AM-toxins are cyclic depsipeptides containing the 3 residues 2-hydroxy-isovaleric acid (2-HIV), dehydroalanine, L-alanine which are common for all 3 AM-toxins I to III. The fourth precursor is L-alpha-amino-methoxyphenyl-valeric acid (L-Amv) for AM-toxin I, L-alpha-amino-phenyl-valeric acid (L-Apv) for AM-toxin II, and L-alpha-amino-hydroxyphenyl-valeric acid (L-Ahv) for AM-toxin III. AM-toxins have two target sites for affecting susceptible apple cells; they cause invagination of the plasma membrane and electrolyte loss and chloroplast disorganization. The non-ribosomal peptide synthetase AMT1 contains 4 catalytic modules and is responsible for activation of each residue in AM-toxin. The aldo-keto reductase AMT2 catalyzes the conversion of 2-keto-isovaleric acid (2-KIV) to 2-hydroxy-isovaleric acid (2-HIV), one of the precursor residues incorporated by AMT1 during AM-toxin biosynthesis, by reduction of its ketone to an alcohol. The cytochrome P450 monooxygenase AMT3 and the thioesterase AMT4 are also important for AM-toxin production, but their exact function within the AM-toxin biosynthesis are not known yet. Up to 21 proteins (including AMT1 to AMT4) are predicted to be involved in AM-toxin biosynthesis since their expression ishighly up-regulated in AM-toxin-producing cultures. This is Aldo-keto reductase AMT2 from Alternaria alternata (Alternaria rot fungus).